The sequence spans 1299 residues: DNA-directed RNA polymerase subunit beta' (1299 aa).

Residues Cys-60, Cys-62, Cys-75, and Cys-78 each contribute to the Zn(2+) site. Mg(2+) contacts are provided by Asp-535, Asp-537, and Asp-539. Zn(2+) contacts are provided by Cys-877, Cys-954, Cys-961, and Cys-964.

It belongs to the RNA polymerase beta' chain family. In terms of assembly, the RNAP catalytic core consists of 2 alpha, 1 beta, 1 beta' and 1 omega subunit. When a sigma factor is associated with the core the holoenzyme is formed, which can initiate transcription. Mg(2+) serves as cofactor. It depends on Zn(2+) as a cofactor.

The catalysed reaction is RNA(n) + a ribonucleoside 5'-triphosphate = RNA(n+1) + diphosphate. Its function is as follows. DNA-dependent RNA polymerase catalyzes the transcription of DNA into RNA using the four ribonucleoside triphosphates as substrates. The chain is DNA-directed RNA polymerase subunit beta' from Paenarthrobacter aurescens (strain TC1).